We begin with the raw amino-acid sequence, 349 residues long: Terpene cyclase rstn5 (349 aa).

Helical transmembrane passes span 4 to 24 (LTPL…WGVF), 81 to 101 (FMVQ…TEGA), 116 to 136 (GLFS…FWFV), 158 to 178 (VVPS…FDPF), and 181 to 201 (GLDL…CISL). Residue Asn-222 is glycosylated (N-linked (GlcNAc...) asparagine). 3 helical membrane passes run 228 to 248 (VAVG…GLTG), 271 to 291 (LVLL…LLLA), and 309 to 329 (TLAV…AWAL).

It belongs to the membrane-bound ascI terpene cyclase family.

The protein resides in the membrane. It functions in the pathway antifungal biosynthesis. Functionally, cyclase; part of the gene cluster that mediates the biosynthesis of the tetrahydropyranyl antifungal agent restricticin that acts as an inhibitor of CYP51 and blocks the ergosterol biosynthesis. The highly reducing polyketide synthase rstn3, the short chain dehydrogenase rstn4, the cyclase rstn5, the FAD-dependent monooxygenase rstn6 and the enoylreductase rstn7 are required to generate the first stable intermediate desmethylrestrictinol. Rstn3 with rstn7 biosynthesize the first polyketide chain intermediate that is reduced by rstn4, followed by epoxidation by rstn6 before 6-endo cyclization via epoxide opening by rstn5 leads to desmethylrestrictinol. The methyltransferase rstn1 then catalyzes the C4 O-methylation of desmethylrestrictinol to produce restrictinol, and the nonribosomal peptide synthetase rstn8 catalyzes the C3 esterification of restrictinol with glycine that leads to restricticin. This Aspergillus nomiae NRRL (strain ATCC 15546 / NRRL 13137 / CBS 260.88 / M93) protein is Terpene cyclase rstn5.